The primary structure comprises 530 residues: Glutamate--cysteine ligase (530 aa).

The protein belongs to the glutamate--cysteine ligase type 1 family. Type 1 subfamily.

The catalysed reaction is L-cysteine + L-glutamate + ATP = gamma-L-glutamyl-L-cysteine + ADP + phosphate + H(+). The protein operates within sulfur metabolism; glutathione biosynthesis; glutathione from L-cysteine and L-glutamate: step 1/2. This chain is Glutamate--cysteine ligase, found in Azotobacter vinelandii (strain DJ / ATCC BAA-1303).